Reading from the N-terminus, the 88-residue chain is UPF0297 protein LAR_0520 (88 aa).

Belongs to the UPF0297 family.

This chain is UPF0297 protein LAR_0520, found in Limosilactobacillus reuteri subsp. reuteri (strain JCM 1112) (Lactobacillus reuteri).